A 538-amino-acid polypeptide reads, in one-letter code: Cytochrome c-552 (538 aa).

Positions 1–55 are cleaved as a signal peptide; that stretch reads MKIYLRFVWILIIILNFLLNLFITTNGVIIVNAFKKSLIVAASFASLSLFNSATA. Residue His-133 participates in heme c binding. Heme contacts are provided by Cys-161, Cys-164, and Lys-165. Heme c contacts are provided by Cys-199, Cys-202, His-203, Cys-264, Cys-267, and His-268. Positions 270, 271, 316, and 318 each coordinate Ca(2+). Tyr-271 serves as a coordination point for substrate. A substrate-binding site is contributed by His-319. 9 residues coordinate heme c: His-330, Cys-337, Cys-340, His-341, His-356, Cys-369, Cys-372, His-373, and His-448.

It belongs to the cytochrome c-552 family. Ca(2+) serves as cofactor. It depends on heme c as a cofactor.

The protein localises to the periplasm. It catalyses the reaction 6 Fe(III)-[cytochrome c] + NH4(+) + 2 H2O = 6 Fe(II)-[cytochrome c] + nitrite + 8 H(+). It participates in nitrogen metabolism; nitrate reduction (assimilation). Its function is as follows. Catalyzes the reduction of nitrite to ammonia, consuming six electrons in the process. This is Cytochrome c-552 from Haemophilus influenzae (strain ATCC 51907 / DSM 11121 / KW20 / Rd).